We begin with the raw amino-acid sequence, 406 residues long: Homocitrate synthase AksA (406 aa).

In terms of domain architecture, Pyruvate carboxyltransferase spans 32–285 (IYIYDTTLRD…DLGLNLEVLP (254 aa)).

This sequence belongs to the alpha-IPM synthase/homocitrate synthase family.

It carries out the reaction acetyl-CoA + 2-oxoglutarate + H2O = (2R)-homocitrate + CoA + H(+). It catalyses the reaction 2-oxoadipate + acetyl-CoA + H2O = (R)-dihomocitrate + CoA + H(+). The catalysed reaction is 2-oxoheptanedioate + acetyl-CoA + H2O = (R)-trihomocitrate + CoA + H(+). The protein operates within organic acid metabolism; 2-oxosuberate biosynthesis. Functionally, catalyzes the condensation of alpha-ketoglutarate and acetyl-CoA to form (R)-homocitrate. Can also catalyze the condensation of alpha-ketoadipate with acetyl-CoA to form (R)-homo(2)citrate, and the condensation of alpha-ketopimelate with acetyl-CoA to form (R)-homo(3)citrate. These reactions are part of the biosynthesis pathway of coenzyme B and biotin. The protein is Homocitrate synthase AksA (aksA) of Methanocaldococcus jannaschii (strain ATCC 43067 / DSM 2661 / JAL-1 / JCM 10045 / NBRC 100440) (Methanococcus jannaschii).